A 922-amino-acid polypeptide reads, in one-letter code: ATP-dependent helicase fft3 (922 aa).

Disordered regions lie at residues 139–177 (EPKMPSYMDDEEASDSLPLSLSSQSLSSQVTNQKPAPHR) and 198–224 (PLSSRKTYEPEADDDSNDDMYSDDDSN). Positions 153 to 166 (DSLPLSLSSQSLSS) are enriched in low complexity. A compositionally biased stretch (acidic residues) spans 207 to 223 (PEADDDSNDDMYSDDDS). 2 positions are modified to phosphoserine: S213 and S219. The region spanning 399 to 567 (YLLYELKLAG…ISLLAFILPH (169 aa)) is the Helicase ATP-binding domain. Residue 412 to 419 (DEMGLGKT) participates in ATP binding. A DEGH box motif is present at residues 518-521 (DEGH). Position 617 is a phosphoserine (S617). The Helicase C-terminal domain occupies 765–922 (KLKKLLTNAV…ETVEAEDDDD (158 aa)).

It belongs to the SNF2/RAD54 helicase family. As to quaternary structure, interacts with the GDP-bound form of spi1.

The protein localises to the nucleus. The protein resides in the chromosome. The catalysed reaction is ATP + H2O = ADP + phosphate + H(+). In terms of biological role, DNA helicase that possesses intrinsic ATP-dependent nucleosome-remodeling activity and is required for heterochromatin organization. Required for maintaining a heterochromatin chromatin structure at centromeres and subtelomeres by protecting these regions from euchromatin assembly. Enhances the nucleotide exchange activity of the pim1 guanine nucleotide exchange factor and abolishes histone-H3-mediated RanGAP inhibition. Involved in the construction of the centromeres. The sequence is that of ATP-dependent helicase fft3 (fft3) from Schizosaccharomyces pombe (strain 972 / ATCC 24843) (Fission yeast).